The chain runs to 623 residues: DNA-directed RNA polymerase subunit gamma (623 aa).

Zn(2+)-binding residues include cysteine 70, cysteine 72, cysteine 85, and cysteine 88. Aspartate 466, aspartate 468, and aspartate 470 together coordinate Mg(2+).

This sequence belongs to the RNA polymerase beta' chain family. RpoC1 subfamily. In cyanobacteria the RNAP catalytic core is composed of 2 alpha, 1 beta, 1 beta', 1 gamma and 1 omega subunit. When a sigma factor is associated with the core the holoenzyme is formed, which can initiate transcription. Mg(2+) serves as cofactor. Requires Zn(2+) as cofactor.

The enzyme catalyses RNA(n) + a ribonucleoside 5'-triphosphate = RNA(n+1) + diphosphate. DNA-dependent RNA polymerase catalyzes the transcription of DNA into RNA using the four ribonucleoside triphosphates as substrates. The protein is DNA-directed RNA polymerase subunit gamma of Acaryochloris marina (strain MBIC 11017).